Here is a 591-residue protein sequence, read N- to C-terminus: Proteasome-associated ATPase (591 aa).

Positions 8–77 (DSVAAARELE…LREEVDRLGQ (70 aa)) form a coiled coil. Residue 278 to 283 (GCGKTL) participates in ATP binding. The docks into pockets in the proteasome alpha-ring stretch occupies residues 590–591 (YL).

It belongs to the AAA ATPase family. As to quaternary structure, homohexamer. Assembles into a hexameric ring structure that caps the 20S proteasome core. Strongly interacts with the prokaryotic ubiquitin-like protein Pup through a hydrophobic interface; the interacting region of ARC lies in its N-terminal coiled-coil domain. There is one Pup binding site per ARC hexamer ring. Upon ATP-binding, the C-terminus of ARC interacts with the alpha-rings of the proteasome core, possibly by binding to the intersubunit pockets.

The protein operates within protein degradation; proteasomal Pup-dependent pathway. Its function is as follows. ATPase which is responsible for recognizing, binding, unfolding and translocation of pupylated proteins into the bacterial 20S proteasome core particle. May be essential for opening the gate of the 20S proteasome via an interaction with its C-terminus, thereby allowing substrate entry and access to the site of proteolysis. Thus, the C-termini of the proteasomal ATPase may function like a 'key in a lock' to induce gate opening and therefore regulate proteolysis. The polypeptide is Proteasome-associated ATPase (Rhodococcus jostii (strain RHA1)).